The sequence spans 389 residues: MVSVSGIRKVQRAEGPATVLAIGTANPPNCIDQSTYADYYFRVTNSEHMTDLKKKFQRICERTQIKNRHMYLTEEILKENPNMCAYKAPSLDAREDMMIREVPRVGKEAATKAIKEWGQPMSKITHLIFCTTSGVALPGVDYELIVLLGLDPCVKRYMMYHQGCFAGGTVLRLAKDLAENNKDARVLIVCSENTAVTFRGPSETDMDSLVGQALFADGAAAIIIGSDPVPEVEKPIFELVSTDQKLVPGSHGAIGGLLREVGLTFYLNKSVPDIISQNINDALNKAFDPLGISDYNSIFWIAHPGGRAILDQVEQKVNLKPEKMKATRDVLSNYGNMSSACVFFIMDLMRKRSLEEGLKTTGEGLDWGVLFGFGPGLTIETVVLRSVAI.

55–58 is a substrate binding site; that stretch reads KFQR. The active site involves C164. Residues L267 and 305–307 contribute to the substrate site; that span reads GGR.

The protein belongs to the thiolase-like superfamily. Chalcone/stilbene synthases family. Homodimer.

The protein localises to the cytoplasm. The enzyme catalyses 4-coumaroyl-CoA + 3 malonyl-CoA + 3 H(+) = trans-resveratrol + 4 CO2 + 4 CoA. The protein operates within phytoalexin biosynthesis; 3,4',5-trihydroxystilbene biosynthesis; 3,4',5-trihydroxystilbene from trans-4-coumarate: step 2/2. The chain is Stilbene synthase 3 from Arachis hypogaea (Peanut).